The sequence spans 287 residues: Fructose-1,6-bisphosphatase class 1 (287 aa).

Residues glutamate 67, aspartate 86, leucine 88, and aspartate 89 each contribute to the Mg(2+) site. Residues aspartate 89–serine 92, tyrosine 195, and lysine 226 contribute to the substrate site. Glutamate 232 contacts Mg(2+).

This sequence belongs to the FBPase class 1 family. In terms of assembly, homotetramer. Requires Mg(2+) as cofactor.

It localises to the cytoplasm. The catalysed reaction is beta-D-fructose 1,6-bisphosphate + H2O = beta-D-fructose 6-phosphate + phosphate. The protein operates within carbohydrate biosynthesis; gluconeogenesis. This chain is Fructose-1,6-bisphosphatase class 1, found in Campylobacter concisus (strain 13826).